Reading from the N-terminus, the 128-residue chain is NADH-quinone oxidoreductase subunit A (128 aa).

3 helical membrane-spanning segments follow: residues I5–A25, L72–V92, and F100–W120.

It belongs to the complex I subunit 3 family. As to quaternary structure, NDH-1 is composed of 14 different subunits. Subunits NuoA, H, J, K, L, M, N constitute the membrane sector of the complex.

The protein localises to the cell membrane. The catalysed reaction is a quinone + NADH + 5 H(+)(in) = a quinol + NAD(+) + 4 H(+)(out). Its function is as follows. NDH-1 shuttles electrons from NADH, via FMN and iron-sulfur (Fe-S) centers, to quinones in the respiratory chain. The immediate electron acceptor for the enzyme in this species is believed to be a menaquinone. Couples the redox reaction to proton translocation (for every two electrons transferred, four hydrogen ions are translocated across the cytoplasmic membrane), and thus conserves the redox energy in a proton gradient. This Mycobacterium bovis (strain ATCC BAA-935 / AF2122/97) protein is NADH-quinone oxidoreductase subunit A.